A 270-amino-acid polypeptide reads, in one-letter code: L-aspartate dehydrogenase (270 aa).

Residues Ala-123 and Asn-191 each coordinate NAD(+). His-221 is an active-site residue.

The protein belongs to the L-aspartate dehydrogenase family.

It carries out the reaction L-aspartate + NADP(+) + H2O = oxaloacetate + NH4(+) + NADPH + H(+). The catalysed reaction is L-aspartate + NAD(+) + H2O = oxaloacetate + NH4(+) + NADH + H(+). Its pathway is cofactor biosynthesis; NAD(+) biosynthesis; iminoaspartate from L-aspartate (dehydrogenase route): step 1/1. In terms of biological role, specifically catalyzes the NAD or NADP-dependent dehydrogenation of L-aspartate to iminoaspartate. This is L-aspartate dehydrogenase from Methanocella arvoryzae (strain DSM 22066 / NBRC 105507 / MRE50).